Reading from the N-terminus, the 221-residue chain is Endo-1,4-beta-xylanase 11A (221 aa).

The N-terminal stretch at 1–18 is a signal peptide; that stretch reads MKFATVLAFATAAGAAFA. One can recognise a GH11 domain in the interval 23–220; that stretch reads SSETTEAGQL…GTGSASMSVS (198 aa). The active-site Nucleophile is E111. N-linked (GlcNAc...) asparagine glycosylation is present at N117. The Proton donor role is filled by E207.

The protein belongs to the glycosyl hydrolase 11 (cellulase G) family.

It is found in the secreted. It catalyses the reaction Endohydrolysis of (1-&gt;4)-beta-D-xylosidic linkages in xylans.. It participates in glycan degradation; xylan degradation. Functionally, endo-1,4-beta-xylanase involved in the hydrolysis of xylan, a major structural heterogeneous polysaccharide found in plant biomass representing the second most abundant polysaccharide in the biosphere, after cellulose. The sequence is that of Endo-1,4-beta-xylanase 11A (XYN11A) from Mycosarcoma maydis (Corn smut fungus).